The sequence spans 228 residues: Biosynthetic peptidoglycan transglycosylase (228 aa).

Residues 8-28 (ILAALVAAFLLYNLWVLGHII) traverse the membrane as a helical segment.

It belongs to the glycosyltransferase 51 family.

Its subcellular location is the cell inner membrane. It catalyses the reaction [GlcNAc-(1-&gt;4)-Mur2Ac(oyl-L-Ala-gamma-D-Glu-L-Lys-D-Ala-D-Ala)](n)-di-trans,octa-cis-undecaprenyl diphosphate + beta-D-GlcNAc-(1-&gt;4)-Mur2Ac(oyl-L-Ala-gamma-D-Glu-L-Lys-D-Ala-D-Ala)-di-trans,octa-cis-undecaprenyl diphosphate = [GlcNAc-(1-&gt;4)-Mur2Ac(oyl-L-Ala-gamma-D-Glu-L-Lys-D-Ala-D-Ala)](n+1)-di-trans,octa-cis-undecaprenyl diphosphate + di-trans,octa-cis-undecaprenyl diphosphate + H(+). The protein operates within cell wall biogenesis; peptidoglycan biosynthesis. Peptidoglycan polymerase that catalyzes glycan chain elongation from lipid-linked precursors. This Chromobacterium violaceum (strain ATCC 12472 / DSM 30191 / JCM 1249 / CCUG 213 / NBRC 12614 / NCIMB 9131 / NCTC 9757 / MK) protein is Biosynthetic peptidoglycan transglycosylase.